We begin with the raw amino-acid sequence, 585 residues long: Glucose oxidase-like protein fsoC (585 aa).

Ala-104 lines the FAD pocket. His-521 acts as the Proton donor in catalysis. His-564 (proton acceptor) is an active-site residue.

The protein belongs to the GMC oxidoreductase family. Monomer. FAD is required as a cofactor.

Its function is as follows. Glucose oxidase-like protein; part of the gene cluster that mediates the biosynthesis of the enfumafungin-type antibiotic fuscoatroside. Four enzymes are sufficient to produce fuscoatroside: the terpene cyclase-glycosyl transferase fusion protein fsoAthe cytochrome P450 monoxygenases fsoD and fsoE, and the acetyltransferase fsoF; the cytochrome P450 monooxygenase fsoB and the glucose oxidase-like protein fsoC do not seem to play a role in biosynthesis of fuscoatroside. Glucose oxidase; part of the gene cluster that mediates the biosynthesis of the enfumafungin-type antibiotic, fuscoatroside. In Humicola fuscoatra, this protein is Glucose oxidase-like protein fsoC.